A 376-amino-acid chain; its full sequence is Glucose-1-phosphate adenylyltransferase (376 aa).

Residues Y101, G166, 181 to 182, and S192 each bind alpha-D-glucose 1-phosphate; that span reads EK.

Belongs to the bacterial/plant glucose-1-phosphate adenylyltransferase family. In terms of assembly, homotetramer.

The enzyme catalyses alpha-D-glucose 1-phosphate + ATP + H(+) = ADP-alpha-D-glucose + diphosphate. Its pathway is glycan biosynthesis; glycogen biosynthesis. Functionally, involved in the biosynthesis of ADP-glucose, a building block required for the elongation reactions to produce glycogen. Catalyzes the reaction between ATP and alpha-D-glucose 1-phosphate (G1P) to produce pyrophosphate and ADP-Glc. The polypeptide is Glucose-1-phosphate adenylyltransferase (Bacillus cytotoxicus (strain DSM 22905 / CIP 110041 / 391-98 / NVH 391-98)).